The sequence spans 249 residues: MAAAATGGRATSQPKKTTKGLTPRQKKILETIQRSVNVNGYPPSMREIGDTVGLASLSSVTHQLSQLEKLGYLRRDPKRPRAMEVLMPLTLDGGATGRTARQAAEPAAAAAPGITASVTELPTALDTAMVPLVGRIAAGGPILADQVVEDVMPLPRQLVGQGELFMLKVAGDSMVDAAICDGDWVVVRRQADAANGDIVAALLDDEATVKTFRQRDGHTWLLPQNTQYEPILGDHATIMGKVVSVLRSL.

Positions 1-25 are disordered; sequence MAAAATGGRATSQPKKTTKGLTPRQ. Positions 45–65 form a DNA-binding region, H-T-H motif; sequence MREIGDTVGLASLSSVTHQLS. Catalysis depends on for autocatalytic cleavage activity residues Ser173 and Lys210.

It belongs to the peptidase S24 family. As to quaternary structure, homodimer.

It carries out the reaction Hydrolysis of Ala-|-Gly bond in repressor LexA.. Its function is as follows. Represses a number of genes involved in the response to DNA damage (SOS response), including recA and lexA. In the presence of single-stranded DNA, RecA interacts with LexA causing an autocatalytic cleavage which disrupts the DNA-binding part of LexA, leading to derepression of the SOS regulon and eventually DNA repair. The polypeptide is LexA repressor (Pseudarthrobacter chlorophenolicus (strain ATCC 700700 / DSM 12829 / CIP 107037 / JCM 12360 / KCTC 9906 / NCIMB 13794 / A6) (Arthrobacter chlorophenolicus)).